A 465-amino-acid polypeptide reads, in one-letter code: Ras GTPase-activating protein-binding protein 1 (465 aa).

In terms of domain architecture, NTF2 spans 11-133; it reads VGREFVRQYY…FYVHNDIFRY (123 aa). Residues Lys-36, Lys-50, Lys-59, Lys-64, Lys-76, and Lys-123 each participate in a glycyl lysine isopeptide (Lys-Gly) (interchain with G-Cter in ubiquitin) cross-link. Residues 142-224 form an acidic disordered region region; sequence ITEPQEESEE…EPVLEETAPE (83 aa). Thr-143 is subject to Phosphothreonine. 2 stretches are compositionally biased toward acidic residues: residues 145-157 and 184-205; these read PQEESEEEVEEPE and EHLEEPVAEPEPEPEPEPEQEP. The tract at residues 145-242 is disordered; it reads PQEESEEEVE…APADIAQTVQ (98 aa). Ser-149 carries the post-translational modification Phosphoserine. Ser-230, Ser-231, Ser-249, and Ser-252 each carry phosphoserine. Positions 254 to 326 are disordered; it reads TSKNLPPSGA…PVREAGEQGD (73 aa). Composition is skewed to basic and acidic residues over residues 296-306 and 317-326; these read PQRDQRVREQR and PVREAGEQGD. The RRM domain maps to 339-414; that stretch reads HQLFIGNLPH…VRLNVEEKKT (76 aa). Residues Lys-352 and Lys-356 each participate in a glycyl lysine isopeptide (Lys-Gly) (interchain with G-Cter in ubiquitin) cross-link. Ser-372 is subject to Phosphoserine. A Glycyl lysine isopeptide (Lys-Gly) (interchain with G-Cter in ubiquitin) cross-link involves residue Lys-375. Lys-375 is subject to N6-acetyllysine; alternate. Lys-375 participates in a covalent cross-link: Glycyl lysine isopeptide (Lys-Gly) (interchain with G-Cter in SUMO2); alternate. Lys-392 is covalently cross-linked (Glycyl lysine isopeptide (Lys-Gly) (interchain with G-Cter in ubiquitin); alternate). Residues 409-465 form an RG-rich region region; it reads VEEKKTRAAREGDRRDNRLRGPGGPRGGLGGGMRGPPRGGMVQKPGFGVGRSIAPRQ. A compositionally biased stretch (basic and acidic residues) spans 412-427; that stretch reads KKTRAAREGDRRDNRL. The tract at residues 412–465 is disordered; it reads KKTRAAREGDRRDNRLRGPGGPRGGLGGGMRGPPRGGMVQKPGFGVGRSIAPRQ. Position 428 is an asymmetric dimethylarginine (Arg-428). Residues 429 to 446 show a composition bias toward gly residues; the sequence is GPGGPRGGLGGGMRGPPR. An Asymmetric dimethylarginine; alternate modification is found at Arg-434. 4 positions are modified to omega-N-methylarginine; alternate: Arg-434, Arg-446, Arg-459, and Arg-464. Arg-459 is modified (dimethylated arginine; alternate).

As to quaternary structure, homodimer and oligomer. Component of a TAU mRNP complex, at least composed of IGF2BP1, ELAVL4 and G3BP1. Binds to the SH3 domain of Ras GTPase-activating protein (RASA1) in proliferating cells. No interaction in quiescent cells. Interacts (via NTF2 domain) with USP10; inhibiting stress granule formation by lowering G3BP1 valence. Interacts (via NTF2 domain) with CAPRIN1; promoting stress granule formation by lowering the saturation-concentration of G3BP1. Interacts (via NTF2 domain) with UBAP2L; promoting stress granule formation. Associates (via RG-rich region) with 40S ribosome subunits. Interacts with RPTOR and SPAG5; this complex is increased by oxidative stress. Interacts with ATXN2L. Interacts with STYXL1. Interacts with CGAS (via N-terminus); this interaction promotes the DNA-binding and activation of CGAS. Interacts (via C-terminus) with RIGI. Interacts with PABPC1. Interacts with QKI (isoforms QKI6 and QKI7); directing N(7)-methylguanine-containing mRNAs to stress granules. Mg(2+) is required as a cofactor. Phosphorylation of the acidic disordered region regulates stress granule assembly. RASA1-dependent phosphorylation of Ser-149 induces a conformational change that prevents self-association. Dephosphorylation after HRAS activation is required for stress granule assembly. Ser-149 phosphorylation induces partial nuclear localization. In terms of processing, arg-435 is dimethylated, probably to asymmetric dimethylarginine. Post-translationally, ubiquitinated by TRIM21 via 'Lys-63'-linked polyubiquitination in the NTF2 domain in response to heat shock, leading to stress granule disassembly: ubiquitination promotes interaction with the FAF2 adapter, followed by interaction with VCP, which extracts G3BP1 from stress granules, leading to stress granule disassembly. In case of prolonged stress, ubiquitination by TRIM21 leads to autophagy-dependent degradation of G3BP1 via recruitment of ubiquitinated G3BP1 by SQSTM1 and/or CALCOCO2 to autophagosomes.

The protein resides in the cytoplasm. The protein localises to the cytosol. It is found in the perikaryon. Its subcellular location is the stress granule. It localises to the nucleus. It carries out the reaction ATP + H2O = ADP + phosphate + H(+). Its activity is regulated as follows. Under physiological conditions, G3BP1 adopts a compact state that is stabilized by intramolecular interactions between the RG-rich and the acidic regions that inhibit phase separation. Upon stress, polysomes disassemble and mRNAs are released in an unfolded protein-free state. Binding of unfolded mRNA to G3BP1 outcompetes the intramolecular interactions and RNA-bound G3BP1 adopts an expanded conformation in which the RG-rich region becomes exposed to engage in protein-protein and protein-RNA interactions, allowing physical cross-linking of RNA molecules to form protein-RNA condensates, leading to liquid-liquid phase separation (LLPS). In terms of biological role, protein involved in various processes, such as stress granule formation and innate immunity. Plays an essential role in stress granule formation. Stress granules are membraneless compartments that store mRNAs and proteins, such as stalled translation pre-initiation complexes, in response to stress. Promotes formation of stress granules phase-separated membraneless compartment by undergoing liquid-liquid phase separation (LLPS) upon unfolded RNA-binding: functions as a molecular switch that triggers RNA-dependent LLPS in response to a rise in intracellular free RNA concentrations. Also acts as an ATP- and magnesium-dependent helicase: unwinds DNA/DNA, RNA/DNA, and RNA/RNA substrates with comparable efficiency. Acts unidirectionally by moving in the 5' to 3' direction along the bound single-stranded DNA. Unwinds preferentially partial DNA and RNA duplexes having a 17 bp annealed portion and either a hanging 3' tail or hanging tails at both 5'- and 3'-ends. Plays an essential role in innate immunity by promoting CGAS and RIGI activity. Participates in the DNA-triggered cGAS/STING pathway by promoting the DNA binding and activation of CGAS. Triggers the condensation of cGAS, a process probably linked to the formation of membrane-less organelles. Also enhances RIGI-induced type I interferon production probably by helping RIGI at sensing pathogenic RNA. May also act as a phosphorylation-dependent sequence-specific endoribonuclease in vitro: Cleaves exclusively between cytosine and adenine and cleaves MYC mRNA preferentially at the 3'-UTR. The polypeptide is Ras GTPase-activating protein-binding protein 1 (G3BP1) (Bos taurus (Bovine)).